The following is a 340-amino-acid chain: Phosphoribosylformylglycinamidine cyclo-ligase (340 aa).

The protein belongs to the AIR synthase family.

The protein resides in the cytoplasm. It catalyses the reaction 2-formamido-N(1)-(5-O-phospho-beta-D-ribosyl)acetamidine + ATP = 5-amino-1-(5-phospho-beta-D-ribosyl)imidazole + ADP + phosphate + H(+). It functions in the pathway purine metabolism; IMP biosynthesis via de novo pathway; 5-amino-1-(5-phospho-D-ribosyl)imidazole from N(2)-formyl-N(1)-(5-phospho-D-ribosyl)glycinamide: step 2/2. This Streptococcus pneumoniae serotype 19F (strain G54) protein is Phosphoribosylformylglycinamidine cyclo-ligase.